The following is a 287-amino-acid chain: 4,4'-diapophytoene synthase (287 aa).

Residues 18–21 (HSKS), tyrosine 41, and arginine 45 contribute to the (2E,6E)-farnesyl diphosphate site. Aspartate 48 and aspartate 52 together coordinate Mg(2+). Glutamine 165 contributes to the (2E,6E)-farnesyl diphosphate binding site. Asparagine 168 serves as a coordination point for Mg(2+). Arginine 171 contacts (2E,6E)-farnesyl diphosphate. Aspartate 172 lines the Mg(2+) pocket. Tyrosine 248 lines the (2E,6E)-farnesyl diphosphate pocket.

The protein belongs to the phytoene/squalene synthase family. CrtM subfamily. Mg(2+) is required as a cofactor.

It carries out the reaction 2 (2E,6E)-farnesyl diphosphate = 15-cis-4,4'-diapophytoene + 2 diphosphate. The protein operates within carotenoid biosynthesis; staphyloxanthin biosynthesis; staphyloxanthin from farnesyl diphosphate: step 1/5. In terms of biological role, involved in the biosynthesis of the yellow-orange carotenoid staphyloxanthin, which plays a role in the virulence via its protective function against oxidative stress. Catalyzes the head-to-head condensation of two molecules of farnesyl diphosphate (FPP) into the colorless C(30) carotenoid 4,4'-diapophytoene (dehydrosqualene). The chain is 4,4'-diapophytoene synthase from Staphylococcus aureus.